The chain runs to 269 residues: uncharacterized protein (269 aa).

Residues 14 to 89 enclose the ACT domain; it reads FEYEIQVNRP…KLREPRLRDR (76 aa).

This is an uncharacterized protein from Bacillus subtilis (strain 168).